The following is a 440-amino-acid chain: 5-methylthioadenosine/S-adenosylhomocysteine deaminase (440 aa).

Residues His-70 and His-72 each contribute to the Zn(2+) site. Substrate contacts are provided by Glu-99 and His-191. His-218 contacts Zn(2+). Positions 221 and 306 each coordinate substrate. Asp-306 provides a ligand contact to Zn(2+).

This sequence belongs to the metallo-dependent hydrolases superfamily. MTA/SAH deaminase family. The cofactor is Zn(2+).

It carries out the reaction S-adenosyl-L-homocysteine + H2O + H(+) = S-inosyl-L-homocysteine + NH4(+). The enzyme catalyses S-methyl-5'-thioadenosine + H2O + H(+) = S-methyl-5'-thioinosine + NH4(+). Catalyzes the deamination of 5-methylthioadenosine and S-adenosyl-L-homocysteine into 5-methylthioinosine and S-inosyl-L-homocysteine, respectively. Is also able to deaminate adenosine. The sequence is that of 5-methylthioadenosine/S-adenosylhomocysteine deaminase from Nitratidesulfovibrio vulgaris (strain DSM 19637 / Miyazaki F) (Desulfovibrio vulgaris).